The primary structure comprises 237 residues: Uridylate kinase (237 aa).

ATP is bound at residue 11–14 (KLSG). Gly-53 lines the UMP pocket. ATP contacts are provided by Gly-54 and Arg-58. UMP is bound by residues Asp-73 and 134 to 141 (TGNPFFTT). ATP contacts are provided by Thr-161, Tyr-167, and Asp-170.

It belongs to the UMP kinase family. Homohexamer.

The protein resides in the cytoplasm. The enzyme catalyses UMP + ATP = UDP + ADP. It participates in pyrimidine metabolism; CTP biosynthesis via de novo pathway; UDP from UMP (UMPK route): step 1/1. Its activity is regulated as follows. Inhibited by UTP. In terms of biological role, catalyzes the reversible phosphorylation of UMP to UDP. This Nitrosomonas europaea (strain ATCC 19718 / CIP 103999 / KCTC 2705 / NBRC 14298) protein is Uridylate kinase.